The following is a 471-amino-acid chain: Serine hydroxymethyltransferase 4 (471 aa).

M1 carries the N-acetylmethionine modification. Residue S39 coordinates L-serine. Pemetrexed contacts are provided by S39, Y59, and E61. Residues E61 and Y69 each contribute to the L-serine site. Pemetrexed is bound by residues 105–107 (SGS), H134, S190, and H218. Residues H218 and K244 each coordinate L-serine. Residue K244 is modified to N6-(pyridoxal phosphate)lysine. Residue G290 coordinates pemetrexed. Methotrexate is bound at residue K373. R389 lines the L-serine pocket. R389 provides a ligand contact to pemetrexed.

Belongs to the SHMT family. As to quaternary structure, homotetramer. Interacts with UBP16. Pyridoxal 5'-phosphate is required as a cofactor. Mostly expressed in flowers, less abundant in roots, inflorescence stems, and siliques, and barely detectable in leaves.

It localises to the cytoplasm. The enzyme catalyses (6R)-5,10-methylene-5,6,7,8-tetrahydrofolate + glycine + H2O = (6S)-5,6,7,8-tetrahydrofolate + L-serine. Its pathway is one-carbon metabolism; tetrahydrofolate interconversion. Its activity is regulated as follows. Inhibited by the antifolate drugs methotrexate and pemetrexed. Functionally, catalyzes the interconversion of serine and glycine with the conversion of tetrahydrofolate (THF) into 5,10-methylene-THF. The polypeptide is Serine hydroxymethyltransferase 4 (Arabidopsis thaliana (Mouse-ear cress)).